The chain runs to 200 residues: Ras-related protein RABF2a (200 aa).

17 to 25 (GDVGAGKSS) contacts GTP. The Effector region motif lies at 39–47 (QESTIGAAF). Residues 65 to 69 (DTAGQ), 123 to 126 (NKAD), and 153 to 154 (SA) each bind GTP. 2 S-geranylgeranyl cysteine lipidation sites follow: C198 and C199.

This sequence belongs to the small GTPase superfamily. Rab family. In terms of assembly, interacts with VPS9A. Interacts with EREX (via PX domain). Binds to VPS3. As to expression, high in stem, root, and inflorescence.

Its subcellular location is the endosome membrane. It is found in the prevacuolar compartment membrane. In terms of biological role, involved in the trafficking of soluble cargo proteins from the prevacuolar compartment to the central vacuole. Involved in vacuolar transport of storage proteins with EREX as effector. Regulates membrane trafficking to protein storage vacuoles (PSVs). The chain is Ras-related protein RABF2a (RABF2A) from Arabidopsis thaliana (Mouse-ear cress).